A 291-amino-acid chain; its full sequence is ATP synthase gamma chain (291 aa).

It belongs to the ATPase gamma chain family. In terms of assembly, F-type ATPases have 2 components, CF(1) - the catalytic core - and CF(0) - the membrane proton channel. CF(1) has five subunits: alpha(3), beta(3), gamma(1), delta(1), epsilon(1). CF(0) has three main subunits: a, b and c.

It localises to the cell inner membrane. Produces ATP from ADP in the presence of a proton gradient across the membrane. The gamma chain is believed to be important in regulating ATPase activity and the flow of protons through the CF(0) complex. The chain is ATP synthase gamma chain from Roseobacter denitrificans (strain ATCC 33942 / OCh 114) (Erythrobacter sp. (strain OCh 114)).